A 492-amino-acid chain; its full sequence is Trehalose-6-phosphate synthase (492 aa).

Position 25 (Arg-25) interacts with D-glucose 6-phosphate. 45–46 (GG) provides a ligand contact to UDP-alpha-D-glucose. D-glucose 6-phosphate is bound by residues Tyr-101 and Asp-155. UDP-alpha-D-glucose is bound by residues Arg-297 and Lys-302. Position 335 (Arg-335) interacts with D-glucose 6-phosphate. Residue 400 to 404 (LVAKE) participates in UDP-alpha-D-glucose binding.

Belongs to the glycosyltransferase 20 family. Homotetramer.

It carries out the reaction ADP-alpha-D-glucose + D-glucose 6-phosphate = alpha,alpha-trehalose 6-phosphate + ADP + H(+). It catalyses the reaction CDP-alpha-D-glucose + D-glucose 6-phosphate = alpha,alpha-trehalose 6-phosphate + CDP + H(+). The enzyme catalyses GDP-alpha-D-glucose + D-glucose 6-phosphate = alpha,alpha-trehalose 6-phosphate + GDP + H(+). The catalysed reaction is TDP-alpha-D-glucose + D-glucose 6-phosphate = 5-methyl-UDP + alpha,alpha-trehalose 6-phosphate + H(+). It carries out the reaction D-glucose 6-phosphate + UDP-alpha-D-glucose = alpha,alpha-trehalose 6-phosphate + UDP + H(+). It functions in the pathway glycan biosynthesis; trehalose biosynthesis. Functionally, probably involved in the osmoprotection via the biosynthesis of trehalose and in the production of glycogen and alpha-glucan via the TreS-Pep2 branch involved in the biosynthesis of maltose-1-phosphate (M1P). Catalyzes the transfer of glucose from UDP-glucose (UDP-Glc) to D-glucose 6-phosphate (Glc-6-P) to form trehalose-6-phosphate. Probably also able to use ADP-Glc, CDP-Glc, GDP-Glc and TDP-Glc as glucosyl donors. This is Trehalose-6-phosphate synthase from Mycobacterium avium (strain 104).